Reading from the N-terminus, the 2495-residue chain is Non-reducing polyketide synthase adrD (2495 aa).

The N-terminal acylcarrier protein transacylase domain (SAT) stretch occupies residues 14–252; that stretch reads VVFGPQSSEI…HHSRHVTAVQ (239 aa). The Ketosynthase family 3 (KS3) domain maps to 386–807; it reads VIPIAITGMG…GSNAALVVKQ (422 aa). Catalysis depends on for beta-ketoacyl synthase activity residues Cys551, His686, and His725. The malonyl-CoA:ACP transacylase (MAT) domain stretch occupies residues 913-1222; it reads LCFGGQNGNE…QALDLGGALA (310 aa). Catalysis depends on Ser1000, which acts as the For acyl/malonyl transferase activity. The interval 1294–1422 is N-terminal hotdog fold; that stretch reads KEFVQLLTKQ…GEISLHPFGQ (129 aa). The 308-residue stretch at 1294 to 1601 folds into the PKS/mFAS DH domain; that stretch reads KEFVQLLTKQ…FTSVSIAGLS (308 aa). The interval 1295 to 1600 is product template (PT) domain; sequence EFVQLLTKQP…TFTSVSIAGL (306 aa). His1325 functions as the Proton acceptor; for dehydratase activity in the catalytic mechanism. The C-terminal hotdog fold stretch occupies residues 1450 to 1601; it reads ESSGLKGFAV…FTSVSIAGLS (152 aa). Asp1508 functions as the Proton donor; for dehydratase activity in the catalytic mechanism. In terms of domain architecture, Carrier spans 1651-1725; that stretch reads SGHFMVVQEM…TLVQTIFPDA (75 aa). Ser1685 bears the O-(pantetheine 4'-phosphoryl)serine mark. The interval 1887-2120 is methyltransferase (CMeT) domain; that stretch reads QHTSEHNLLR…GFQWVDWTYN (234 aa). The thioesterase (TE) domain stretch occupies residues 2150–2495; the sequence is YLMNEETIVY…YEFLRDHVRY (346 aa). Catalysis depends on for thioesterase activity residues Ser2273 and Asp2432.

It catalyses the reaction 3 malonyl-CoA + acetyl-CoA + 2 S-adenosyl-L-methionine = 3,5-dimethylorsellinate + 2 S-adenosyl-L-homocysteine + 3 CO2 + 4 CoA. It participates in secondary metabolite biosynthesis; terpenoid biosynthesis. In terms of biological role, non-reducing polyketide synthase; part of the gene cluster that mediates the biosynthesis of andrastins, meroterpenoid compounds that exhibit inhibitory activity against ras farnesyltransferase, suggesting that they could be promising leads for antitumor agents. The first step of the pathway is the synthesis of 3,5-dimethylorsellinic acid (DMOA) by the polyketide synthase adrD via condensation of one acetyl-CoA starter unit with 3 malonyl-CoA units and 2 methylations. DMAO is then converted to farnesyl-DMAO by the prenyltransferase adrG. The methyltransferase adrK catalyzes the methylation of the carboxyl group of farnesyl-DMAO to farnesyl-DMAO methyl ester which is further converted to epoxyfarnesyl-DMAO methyl ester by the FAD-dependent monooxygenase adrH. The terpene cyclase adrI then catalyzes the carbon skeletal rearrangement to generate the andrastin E, the first compound in the pathway having the andrastin scaffold, with the tetracyclic ring system. The post-cyclization tailoring enzymes adrF, adrE, adrJ, and adrA, are involved in the conversion of andrastin E into andrastin A. The short chain dehydrogenase adrF is responsible for the oxidation of the C-3 a hydroxyl group of andrastin E to yield the corresponding ketone, andrastin D. The ketoreductase adrE stereoselectively reduces the carbonyl moiety to reverse the stereochemistry of the C-3 position to yield andrastin F. The acetyltransferase adrJ is the acetyltransferase that attaches the acetyl group to the C-3 hydroxyl group of andrastin F to yield andrastin C. Finally, the cytochrome P450 monooxygenase adrA catalyzes two sequential oxidation reactions of the C-23 methyl group, to generate the corresponding alcohol andrastin B, and aldehyde andrastin A. In Penicillium roqueforti, this protein is Non-reducing polyketide synthase adrD.